Consider the following 357-residue polypeptide: MSELNALLKDINGSLTATSESLERLSGIYSNSATDEIPESNQLHEHLFYDAKKPAEKVSLLSLKNGSMLGYINSLLMLIGNRLDDECKDPSAMDARERSIQHRVVLERGVKPLEKKLAYQLDKLTRAYVKMEKEYKDAEKRALEKSTLVNHSGNDDSEDDESSEDEIAYRPNTSGIINTNKKSSAYRVEETAKQENGEENDDNETGVYKPPKITAVLPPQQTHFEDRFDAREHKDRSNKSRMQAMEEYIRESSDQPDWSASIGADIVNHGRGGIKSLRDTEKERRVTSFEEDNFTRLNITNKAEKRKQKQRERNARMNVIGGEDFGIFSSKRKLEDSTSRRGAKKTRSAWDRAQRRL.

Ser-2 carries the N-acetylserine modification. Disordered stretches follow at residues 146–211 (STLV…YKPP) and 301–357 (NKAE…QRRL). The segment covering 155–166 (DDSEDDESSEDE) has biased composition (acidic residues). The segment covering 171 to 183 (PNTSGIINTNKKS) has biased composition (polar residues). Basic and acidic residues-rich tracts occupy residues 187–196 (RVEETAKQEN) and 348–357 (SAWDRAQRRL).

The protein resides in the nucleus. It is found in the nucleolus. Its function is as follows. Component of the U3 small nucleolar ribonucleoprotein. Required for the early cleavages at sites A0, A1 and A2 of the pre-ribosomal RNA. Participates in ribosome biogenesis. The protein is U3 small nucleolar ribonucleoprotein protein LCP5 (LCP5) of Saccharomyces cerevisiae (strain ATCC 204508 / S288c) (Baker's yeast).